The chain runs to 370 residues: Chaperone protein DnaJ (370 aa).

The J domain occupies 5-69 (DYYEVLGVDR…QKKAHYDQFG (65 aa)). Residues 128 to 210 (GKETTIEIPR…CGGKGKVRKR (83 aa)) form a CR-type zinc finger. Zn(2+)-binding residues include Cys141, Cys144, Cys158, Cys161, Cys184, Cys187, Cys198, and Cys201. 4 CXXCXGXG motif repeats span residues 141 to 148 (CHTCSGSG), 158 to 165 (CPHCGGSG), 184 to 191 (CHHCEGTG), and 198 to 205 (CATCGGKG).

Belongs to the DnaJ family. In terms of assembly, homodimer. It depends on Zn(2+) as a cofactor.

It is found in the cytoplasm. In terms of biological role, participates actively in the response to hyperosmotic and heat shock by preventing the aggregation of stress-denatured proteins and by disaggregating proteins, also in an autonomous, DnaK-independent fashion. Unfolded proteins bind initially to DnaJ; upon interaction with the DnaJ-bound protein, DnaK hydrolyzes its bound ATP, resulting in the formation of a stable complex. GrpE releases ADP from DnaK; ATP binding to DnaK triggers the release of the substrate protein, thus completing the reaction cycle. Several rounds of ATP-dependent interactions between DnaJ, DnaK and GrpE are required for fully efficient folding. Also involved, together with DnaK and GrpE, in the DNA replication of plasmids through activation of initiation proteins. In Halalkalibacterium halodurans (strain ATCC BAA-125 / DSM 18197 / FERM 7344 / JCM 9153 / C-125) (Bacillus halodurans), this protein is Chaperone protein DnaJ.